A 610-amino-acid polypeptide reads, in one-letter code: ATP-dependent RNA helicase HAS1 (610 aa).

Disordered regions lie at residues 1-81 (MTAA…AELK) and 112-131 (ALAVADLPSGTSIPTVDDPT). The segment covering 9–18 (KKRKRKHKAK) has biased composition (basic residues). Residues 51–76 (PEVEDVVADASENDVESGAEEDEEQV) are compositionally biased toward acidic residues. Positions 131 to 159 (TRFDELNLSERTMEAIKTMGFESMTEIQR) match the Q motif motif. The Helicase ATP-binding domain occupies 162–337 (IPPLLSGKDV…RISLKAGPLY (176 aa)). 175-182 (AKTGSGKT) contacts ATP. A DEAD box motif is present at residues 285–288 (DEAD). The Helicase C-terminal domain occupies 351 to 521 (GLEQGYVICD…NIQSQLEALI (171 aa)). Basic and acidic residues predominate over residues 584 to 594 (DKKVEGRREYG). The interval 584 to 610 (DKKVEGRREYGRQPQQGRRPMKPNKRF) is disordered.

Belongs to the DEAD box helicase family. DDX18/HAS1 subfamily. In terms of assembly, associates in the nucleolus with the 60S and pre-60S ribosomal subunits.

It localises to the nucleus. Its subcellular location is the nucleolus. The enzyme catalyses ATP + H2O = ADP + phosphate + H(+). Functionally, ATP-dependent RNA helicase involved in 40S ribosomal subunit biogenesis. Required for the processing and cleavage of 35S pre-rRNA at sites A0, A1, and A2, leading to mature 18S rRNA. The protein is ATP-dependent RNA helicase HAS1 (HAS1) of Phaeosphaeria nodorum (strain SN15 / ATCC MYA-4574 / FGSC 10173) (Glume blotch fungus).